The primary structure comprises 500 residues: Squalene epoxidase ERG1 (500 aa).

A helical membrane pass occupies residues 20 to 40; that stretch reads EADVVVVGAGVFGCTMAFALA. FAD contacts are provided by residues 30 to 31, 50 to 51, Arg58, Arg145, Asp332, and Met345; these read VF and ER. 2 helical membrane-spanning segments follow: residues 450–470 and 474–494; these read AFLAIWLNACSVVGCGILGIF and LAIIDAVLILWKACIVFIPIM.

This sequence belongs to the squalene monooxygenase family. Requires FAD as cofactor.

It is found in the microsome membrane. Its subcellular location is the endoplasmic reticulum membrane. The protein resides in the lipid droplet. The enzyme catalyses squalene + reduced [NADPH--hemoprotein reductase] + O2 = (S)-2,3-epoxysqualene + oxidized [NADPH--hemoprotein reductase] + H2O + H(+). It functions in the pathway terpene metabolism; lanosterol biosynthesis; lanosterol from farnesyl diphosphate: step 2/3. It participates in steroid metabolism; ergosterol biosynthesis. In terms of biological role, squalene epoxidase; part of the third module of ergosterol biosynthesis pathway that includes the late steps of the pathway. ERG1 catalyzes the epoxidation of squalene into 2,3-epoxysqualene. The third module or late pathway involves the ergosterol synthesis itself through consecutive reactions that mainly occur in the endoplasmic reticulum (ER) membrane. Firstly, the squalene synthase ERG9 catalyzes the condensation of 2 farnesyl pyrophosphate moieties to form squalene, which is the precursor of all steroids. Squalene synthase is crucial for balancing the incorporation of farnesyl diphosphate (FPP) into sterol and nonsterol isoprene synthesis. Secondly, squalene is converted into lanosterol by the consecutive action of the squalene epoxidase ERG1 and the lanosterol synthase ERG7. Then, the delta(24)-sterol C-methyltransferase ERG6 methylates lanosterol at C-24 to produce eburicol. Eburicol is the substrate of the sterol 14-alpha demethylase encoded by CYP51A, CYP51B and CYP51C, to yield 4,4,24-trimethyl ergosta-8,14,24(28)-trienol. CYP51B encodes the enzyme primarily responsible for sterol 14-alpha-demethylation, and plays an essential role in ascospore formation. CYP51A encodes an additional sterol 14-alpha-demethylase, induced on ergosterol depletion and responsible for the intrinsic variation in azole sensitivity. The third CYP51 isoform, CYP51C, does not encode a sterol 14-alpha-demethylase, but is required for full virulence on host wheat ears. The C-14 reductase ERG24 then reduces the C14=C15 double bond which leads to 4,4-dimethylfecosterol. A sequence of further demethylations at C-4, involving the C-4 demethylation complex containing the C-4 methylsterol oxidases ERG25, the sterol-4-alpha-carboxylate 3-dehydrogenase ERG26 and the 3-keto-steroid reductase ERG27, leads to the production of fecosterol via 4-methylfecosterol. ERG28 has a role as a scaffold to help anchor ERG25, ERG26 and ERG27 to the endoplasmic reticulum. The C-8 sterol isomerase ERG2 then catalyzes the reaction which results in unsaturation at C-7 in the B ring of sterols and thus converts fecosterol to episterol. The sterol-C5-desaturases ERG3A and ERG3BB then catalyze the introduction of a C-5 double bond in the B ring to produce 5-dehydroepisterol. The C-22 sterol desaturases ERG5A and ERG5B further convert 5-dehydroepisterol into ergosta-5,7,22,24(28)-tetraen-3beta-ol by forming the C-22(23) double bond in the sterol side chain. Finally, ergosta-5,7,22,24(28)-tetraen-3beta-ol is substrate of the C-24(28) sterol reductase ERG4 to produce ergosterol. This chain is Squalene epoxidase ERG1, found in Gibberella zeae (strain ATCC MYA-4620 / CBS 123657 / FGSC 9075 / NRRL 31084 / PH-1) (Wheat head blight fungus).